A 5162-amino-acid chain; its full sequence is Linear gramicidin synthase subunit B (5162 aa).

Carrier domains are found at residues 963–1038 (APRN…QALR), 2027–2101 (EPQS…VVLE), 3541–3616 (APRN…GAIG), and 4601–4675 (AATS…GQST). O-(pantetheine 4'-phosphoryl)serine is present on residues Ser-998, Ser-2062, Ser-3576, and Ser-4636.

The protein belongs to the ATP-dependent AMP-binding enzyme family. Large multienzyme complex composed of 4 subunits; LgrA, LgrB, LgrC and LgrD. Requires pantetheine 4'-phosphate as cofactor.

Its function is as follows. Activates the 3rd to 6th amino acids (Ala, D-Leu, Ala and D-Val) in linear gramicidin and catalyzes the formation of the peptide bond between them. This enzyme is also responsible for the epimerization of the 4th (D-Leu) and the 6th (D-Val) amino acids. The polypeptide is Linear gramicidin synthase subunit B (lgrB) (Brevibacillus parabrevis).